Reading from the N-terminus, the 400-residue chain is ATP phosphoribosyltransferase regulatory subunit (400 aa).

It belongs to the class-II aminoacyl-tRNA synthetase family. HisZ subfamily. Heteromultimer composed of HisG and HisZ subunits.

The protein resides in the cytoplasm. It participates in amino-acid biosynthesis; L-histidine biosynthesis; L-histidine from 5-phospho-alpha-D-ribose 1-diphosphate: step 1/9. In terms of biological role, required for the first step of histidine biosynthesis. May allow the feedback regulation of ATP phosphoribosyltransferase activity by histidine. In Hahella chejuensis (strain KCTC 2396), this protein is ATP phosphoribosyltransferase regulatory subunit.